A 459-amino-acid chain; its full sequence is UDP-N-acetylmuramate--L-alanine ligase (459 aa).

Residue 113–119 (GSHGKTS) participates in ATP binding.

This sequence belongs to the MurCDEF family.

The protein resides in the cytoplasm. The enzyme catalyses UDP-N-acetyl-alpha-D-muramate + L-alanine + ATP = UDP-N-acetyl-alpha-D-muramoyl-L-alanine + ADP + phosphate + H(+). It functions in the pathway cell wall biogenesis; peptidoglycan biosynthesis. Its function is as follows. Cell wall formation. The chain is UDP-N-acetylmuramate--L-alanine ligase from Desulfotalea psychrophila (strain LSv54 / DSM 12343).